Consider the following 399-residue polypeptide: Argininosuccinate synthase (399 aa).

9-17 (AYSGGLDTS) is an ATP binding site. Tyrosine 85 provides a ligand contact to L-citrulline. Position 115 (glycine 115) interacts with ATP. Threonine 117, asparagine 121, and aspartate 122 together coordinate L-aspartate. Residue asparagine 121 coordinates L-citrulline. 4 residues coordinate L-citrulline: arginine 125, serine 173, glutamate 258, and tyrosine 270.

This sequence belongs to the argininosuccinate synthase family. Type 1 subfamily. In terms of assembly, homotetramer.

The protein localises to the cytoplasm. The enzyme catalyses L-citrulline + L-aspartate + ATP = 2-(N(omega)-L-arginino)succinate + AMP + diphosphate + H(+). It functions in the pathway amino-acid biosynthesis; L-arginine biosynthesis; L-arginine from L-ornithine and carbamoyl phosphate: step 2/3. In Streptococcus gordonii (strain Challis / ATCC 35105 / BCRC 15272 / CH1 / DL1 / V288), this protein is Argininosuccinate synthase.